The following is a 147-amino-acid chain: Large ribosomal subunit protein uL22 (147 aa).

Residues 110 to 147 form a disordered region; that stretch reads EEKKTVAKKAPAAKKTTTTKAPAKKTTSTKKATAKKES. Positions 117–140 are enriched in low complexity; sequence KKAPAAKKTTTTKAPAKKTTSTKK.

This sequence belongs to the universal ribosomal protein uL22 family. As to quaternary structure, part of the 50S ribosomal subunit.

This protein binds specifically to 23S rRNA; its binding is stimulated by other ribosomal proteins, e.g. L4, L17, and L20. It is important during the early stages of 50S assembly. It makes multiple contacts with different domains of the 23S rRNA in the assembled 50S subunit and ribosome. Its function is as follows. The globular domain of the protein is located near the polypeptide exit tunnel on the outside of the subunit, while an extended beta-hairpin is found that lines the wall of the exit tunnel in the center of the 70S ribosome. This Campylobacter jejuni subsp. jejuni serotype O:23/36 (strain 81-176) protein is Large ribosomal subunit protein uL22.